The following is a 147-amino-acid chain: MPTYTPKAGDTTRSWYVIDASDVVLGRLASAAATLLRGKHKPTFTPNVDGGDFVIVINADKIAVSGDKLTKKFAYRHSGYPGGLRKRTIGELLEKHPTRVVENAIIGMLPHNKLGRQIQKKLKVYAGPDHPHAAQQPIPFEIKQVAQ.

The protein belongs to the universal ribosomal protein uL13 family. Part of the 50S ribosomal subunit.

In terms of biological role, this protein is one of the early assembly proteins of the 50S ribosomal subunit, although it is not seen to bind rRNA by itself. It is important during the early stages of 50S assembly. This Mycolicibacterium smegmatis (strain ATCC 700084 / mc(2)155) (Mycobacterium smegmatis) protein is Large ribosomal subunit protein uL13.